The following is a 634-amino-acid chain: Pescadillo homolog (634 aa).

In terms of domain architecture, BRCT spans 321 to 414; the sequence is RLRTLFKGLK…QLLPTNKYFM (94 aa). 3 disordered regions span residues 437-473, 491-561, and 603-634; these read EEKA…EEIE, EYKK…RKAE, and NIDA…LKMA. Residue S453 is modified to Phosphoserine. Acidic residues-rich tracts occupy residues 454-473 and 501-527; these read DDDD…EEIE and VNED…DVEQ. Coiled coils occupy residues 460 to 546 and 596 to 629; these read SDAE…KVES and LLRK…AAAK. Composition is skewed to basic and acidic residues over residues 528–548 and 603–623; these read LDDK…ESGK and NIDA…KKAA. Residues 624–634 are compositionally biased toward low complexity; that stretch reads AEAAAKALKMA.

Belongs to the pescadillo family.

The protein resides in the nucleus. The protein localises to the nucleolus. It is found in the nucleoplasm. In terms of biological role, required for maturation of ribosomal RNAs and formation of the large ribosomal subunit. This is Pescadillo homolog from Drosophila willistoni (Fruit fly).